Consider the following 629-residue polypeptide: MCTKRQYGLLESIRSPRDLDSFTPHQLDELECQVRDFLIQSVAKTGGHLGSNLGVVELSIALHRSFRSPEDCIIFDVGHQCYVHKLITGRHDFKALRCKNGLSGYPSRHESNHDIVENSHASAALSWADGVSRARTLLGNDNYVIAVVGDGSLTGGMCWEALNNISDDNNRRLVIVVNDNGRSYARTIGGIARFLNAVRASKSYLWLRESSEAVFSHMGSPGRRLYQGIRGAIHGFLSRFSSSNKLFSNLDIRYLGPINGHNRKALEKAFKQAKQYARPIIVHVITEKGHGYPPALEDALDCLHTVGVIDPSTGKSASVQGQVRQDTWTGVFGEELLRLAESNTNIVAVTAAMLHPTGLSMFAEKFPHRVFDVGIAEQHAVASAAGLAYEGLHPVVAIYSTFMNRAFDQVMMDVALHGAPVTFVLDRAGITGPDGASHHGIWDLSLLRIVPGIKLYAPRDASTLRNTLALVCSEDCPTAIRFPRGSVCDDLPALRSLDDGIDVLYGSCDREDIVIVAIGVMAHACVRAAQLLAESGIESTVINPVCFWPLHRQVLARVSKAKLVVLAEEGAKSPGLGDYIAGRRLLEFVIPGDFQPQGSRDELLDAIGLNGEHIARKIKARFNQIINCV.

Thiamine diphosphate-binding positions include His-79 and 119 to 121 (SHA). Mg(2+) is bound at residue Asp-150. Thiamine diphosphate is bound by residues 151 to 152 (GS), Asn-180, Tyr-292, and Glu-377. Asn-180 provides a ligand contact to Mg(2+).

It belongs to the transketolase family. DXPS subfamily. In terms of assembly, homodimer. Mg(2+) serves as cofactor. Requires thiamine diphosphate as cofactor.

The enzyme catalyses D-glyceraldehyde 3-phosphate + pyruvate + H(+) = 1-deoxy-D-xylulose 5-phosphate + CO2. It functions in the pathway metabolic intermediate biosynthesis; 1-deoxy-D-xylulose 5-phosphate biosynthesis; 1-deoxy-D-xylulose 5-phosphate from D-glyceraldehyde 3-phosphate and pyruvate: step 1/1. In terms of biological role, catalyzes the acyloin condensation reaction between C atoms 2 and 3 of pyruvate and glyceraldehyde 3-phosphate to yield 1-deoxy-D-xylulose-5-phosphate (DXP). The chain is 1-deoxy-D-xylulose-5-phosphate synthase from Tropheryma whipplei (strain TW08/27) (Whipple's bacillus).